A 369-amino-acid polypeptide reads, in one-letter code: tRNA/tmRNA (uracil-C(5))-methyltransferase (369 aa).

S-adenosyl-L-methionine-binding residues include Gln-193, Tyr-221, Asn-226, Glu-242, and Asp-302. Cys-327 functions as the Nucleophile in the catalytic mechanism. The active-site Proton acceptor is the Glu-361.

Belongs to the class I-like SAM-binding methyltransferase superfamily. RNA M5U methyltransferase family. TrmA subfamily.

The catalysed reaction is uridine(54) in tRNA + S-adenosyl-L-methionine = 5-methyluridine(54) in tRNA + S-adenosyl-L-homocysteine + H(+). It carries out the reaction uridine(341) in tmRNA + S-adenosyl-L-methionine = 5-methyluridine(341) in tmRNA + S-adenosyl-L-homocysteine + H(+). Functionally, dual-specificity methyltransferase that catalyzes the formation of 5-methyluridine at position 54 (m5U54) in all tRNAs, and that of position 341 (m5U341) in tmRNA (transfer-mRNA). This is tRNA/tmRNA (uracil-C(5))-methyltransferase from Actinobacillus succinogenes (strain ATCC 55618 / DSM 22257 / CCUG 43843 / 130Z).